The following is a 331-amino-acid chain: Biotin synthase (331 aa).

The Radical SAM core domain occupies 53 to 271 (TELQLSQLLS…IAVARIVCPK (219 aa)). [4Fe-4S] cluster-binding residues include Cys-68, Cys-72, and Cys-75. Cys-112, Cys-143, Cys-203, and Arg-275 together coordinate [2Fe-2S] cluster.

The protein belongs to the radical SAM superfamily. Biotin synthase family. In terms of assembly, homodimer. Requires [4Fe-4S] cluster as cofactor. [2Fe-2S] cluster serves as cofactor.

The catalysed reaction is (4R,5S)-dethiobiotin + (sulfur carrier)-SH + 2 reduced [2Fe-2S]-[ferredoxin] + 2 S-adenosyl-L-methionine = (sulfur carrier)-H + biotin + 2 5'-deoxyadenosine + 2 L-methionine + 2 oxidized [2Fe-2S]-[ferredoxin]. It functions in the pathway cofactor biosynthesis; biotin biosynthesis; biotin from 7,8-diaminononanoate: step 2/2. Its function is as follows. Catalyzes the conversion of dethiobiotin (DTB) to biotin by the insertion of a sulfur atom into dethiobiotin via a radical-based mechanism. The chain is Biotin synthase from Phenylobacterium zucineum (strain HLK1).